We begin with the raw amino-acid sequence, 130 residues long: Small ribosomal subunit protein uS11c (130 aa).

This sequence belongs to the universal ribosomal protein uS11 family. In terms of assembly, part of the 30S ribosomal subunit.

The protein localises to the plastid. The protein resides in the chloroplast. The sequence is that of Small ribosomal subunit protein uS11c from Porphyra purpurea (Red seaweed).